Consider the following 174-residue polypeptide: UPF0398 protein llmg_0513 (174 aa).

It belongs to the UPF0398 family.

In Lactococcus lactis subsp. cremoris (strain MG1363), this protein is UPF0398 protein llmg_0513.